Reading from the N-terminus, the 390-residue chain is Fluoride export protein 1 (390 aa).

Residues 1-22 (MVAPLVSESQSSSIEETDEQQQ) form a disordered region. The Cytoplasmic segment spans residues 1-72 (MVAPLVSESQ…RFLDKTQKYY (72 aa)). The chain crosses the membrane as a helical span at residues 73-93 (PVILNIVHGAIWGVLVRKGLM). At 94–100 (SLTTYSG) the chain is on the extracellular side. The chain crosses the membrane as a helical span at residues 101 to 121 (SFLSGVIWANFAACVVMGLAI). At 122-143 (DGEVFWIRLLEEKDYPNKGAIP) the chain is on the cytoplasmic side. Residues 144–164 (VYTGLTTGFCGTVSSFSSVIL) form a helical membrane-spanning segment. Over 165 to 185 (EAFNKAADTDIGVRHHYPNGA) the chain is Extracellular. Residues 186–206 (YGIMQFLAVILAQFGLSIMGF) traverse the membrane as a helical segment. Topologically, residues 207–229 (HMGKQFSAVVDNYLPLVTKRIYK) are cytoplasmic. The chain crosses the membrane as a helical span at residues 230–250 (VLELTSMILGVVLVVITCILI). Topologically, residues 251–256 (GVKKQG) are extracellular. A helical membrane pass occupies residues 257 to 279 (SWRSWTFSMLFAPFGALLRYYLS). The Cytoplasmic portion of the chain corresponds to 280–290 (KFLNNKVSNFP). A helical membrane pass occupies residues 291–311 (LGTFTANFLGTLLLAVFTLLA). Residues 312 to 338 (RGKLPGGKGHIVTNTIALHVLEGLDDG) lie on the Extracellular side of the membrane. Residues 339-359 (FCGGLTTVSTFVVELFGLKTL) form a helical membrane-spanning segment. Residues 360–368 (FSYRYGTIS) lie on the Cytoplasmic side of the membrane. Residues 369 to 389 (ILVCFAGVVLILGSYNWSVGL) traverse the membrane as a helical segment. A topological domain (extracellular) is located at residue D390.

Belongs to the fluoride channel Fluc/FEX (TC 1.A.43) family.

The protein localises to the cell membrane. The enzyme catalyses fluoride(in) = fluoride(out). Fluoride channel required for the rapid expulsion of cytoplasmic fluoride. This chain is Fluoride export protein 1, found in Candida albicans (strain SC5314 / ATCC MYA-2876) (Yeast).